Here is a 476-residue protein sequence, read N- to C-terminus: PRAME family member 6 (476 aa).

One copy of the LRR 1; degenerate repeat lies at 97–124; it reads RWKLQVLDLQDVCENFWMVWSEAMARGC. An LRR 2; degenerate repeat occupies 179-203; sequence HLCCKKLKILGMPFRNIRSILKMVN. One copy of the LRR 3; degenerate repeat lies at 204-230; sequence LDCIQEVEVNCKWVLPILTQFTPYLGH. The LRR 4; degenerate repeat unit spans residues 231-266; it reads MRNLQKLVLSHMDVSRYVSPEQKKEIVTQFTTQFLK. 5 LRR repeats span residues 267–292, 293–324, 325–345, 349–376, and 377–401; these read LCCL…LSCL, KTSL…SQLK, TLDL…QILL, AATL…ALSR, and CFEL…LLSH.

The protein belongs to the PRAME family. In terms of assembly, component of a CRL2 E3 ubiquitin-protein ligase complex, also named ECS (Elongin BC-CUL2/5-SOCS-box protein) complex, composed of CUL2, Elongin BC (ELOB and ELOC), RBX1 and substrate-specific adapter PRAMEF6.

It functions in the pathway protein modification; protein ubiquitination. Functionally, substrate-recognition component of a Cul2-RING (CRL2) E3 ubiquitin-protein ligase complex, which mediates ubiquitination of target proteins, leading to their degradation. The CRL2(PRAMEF6) complex mediates ubiquitination and degradation of truncated MSRB1/SEPX1 selenoproteins produced by failed UGA/Sec decoding. The protein is PRAME family member 6 of Homo sapiens (Human).